The following is a 779-amino-acid chain: Glutathione biosynthesis bifunctional protein GshAB (779 aa).

A glutamate--cysteine ligase region spans residues 1–346; that stretch reads MAFSKNILDS…ETANRNQEQA (346 aa). One can recognise an ATP-grasp domain in the interval 512 to 768; that stretch reads KKILDQAGIN…LDDKILDALG (257 aa). 539–597 contributes to the ATP binding site; sequence PYYRGRAIVIKPKSTNFGIGITIIKENNRHDFFAQGIAQAFKHEATVLIENFSSGKEYR. Mg(2+) is bound by residues Asp-719, Glu-738, and Asn-740. Positions 719, 738, and 740 each coordinate Mn(2+).

In the N-terminal section; belongs to the glutamate--cysteine ligase type 1 family. Type 2 subfamily. Monomer. It depends on Mg(2+) as a cofactor. The cofactor is Mn(2+).

It carries out the reaction L-cysteine + L-glutamate + ATP = gamma-L-glutamyl-L-cysteine + ADP + phosphate + H(+). It catalyses the reaction gamma-L-glutamyl-L-cysteine + glycine + ATP = glutathione + ADP + phosphate + H(+). Its pathway is sulfur metabolism; glutathione biosynthesis; glutathione from L-cysteine and L-glutamate: step 1/2. It participates in sulfur metabolism; glutathione biosynthesis; glutathione from L-cysteine and L-glutamate: step 2/2. Its function is as follows. Synthesizes glutathione from L-glutamate and L-cysteine via gamma-L-glutamyl-L-cysteine. This chain is Glutathione biosynthesis bifunctional protein GshAB, found in Desulfotalea psychrophila (strain LSv54 / DSM 12343).